We begin with the raw amino-acid sequence, 57 residues long: Ribosome modulation factor 1 (57 aa).

The segment covering Met1–Thr14 has biased composition (basic residues). Residues Met1–Arg24 are disordered.

It belongs to the ribosome modulation factor family.

The protein resides in the cytoplasm. During stationary phase, converts 70S ribosomes to an inactive dimeric form (100S ribosomes). The sequence is that of Ribosome modulation factor 1 from Colwellia psychrerythraea (strain 34H / ATCC BAA-681) (Vibrio psychroerythus).